Reading from the N-terminus, the 60-residue chain is Large ribosomal subunit protein uL30 (60 aa).

It belongs to the universal ribosomal protein uL30 family. Part of the 50S ribosomal subunit.

The protein is Large ribosomal subunit protein uL30 of Cutibacterium acnes (strain DSM 16379 / KPA171202) (Propionibacterium acnes).